Reading from the N-terminus, the 974-residue chain is Coiled-coil domain-containing protein 146 (974 aa).

Residues methionine 1–serine 44 are disordered. The span at glutamate 10 to glutamate 21 shows a compositional bias: acidic residues. Serine 12 is modified (phosphoserine). Coiled-coil stretches lie at residues valine 105–glutamate 160, lysine 195–asparagine 340, leucine 421–leucine 474, lysine 512–glycine 660, glutamine 687–isoleucine 712, and leucine 767–methionine 848.

Interacts with CCDC38 and CCDC42. Interacts with intraflagellar transport proteins IFT20 and IFT88.

The protein resides in the cytoplasm. It localises to the cytoskeleton. It is found in the microtubule organizing center. Its subcellular location is the centrosome. The protein localises to the centriole. The protein resides in the cell projection. It localises to the cilium. It is found in the flagellum. Its subcellular location is the flagellum axoneme. The protein localises to the cilium basal body. The protein resides in the midbody. In terms of biological role, essential for sperm flagellum biogenesis and male fertility. The chain is Coiled-coil domain-containing protein 146 (Ccdc146) from Rattus norvegicus (Rat).